The chain runs to 429 residues: Isocitrate dehydrogenase [NADP] (429 aa).

T108 contributes to the NADP(+) binding site. 5 residues coordinate D-threo-isocitrate: S117, N119, R123, R133, and R156. D308 is a binding site for Mg(2+). NADP(+)-binding positions include 340–346, N353, Y393, and R397; that span reads HGSAPKY.

It belongs to the isocitrate and isopropylmalate dehydrogenases family. As to quaternary structure, homodimer. Requires Mg(2+) as cofactor. It depends on Mn(2+) as a cofactor.

It carries out the reaction D-threo-isocitrate + NADP(+) = 2-oxoglutarate + CO2 + NADPH. In terms of biological role, catalyzes the oxidative decarboxylation of isocitrate to 2-oxoglutarate and carbon dioxide with the concomitant reduction of NADP(+). The sequence is that of Isocitrate dehydrogenase [NADP] (icd) from Caldococcus noboribetus.